The sequence spans 344 residues: Meiotic recombination protein DMC1 homolog A (344 aa).

ATP is bound at residue 133–140 (GEFRSGKT). Residue Arg-235 coordinates dsDNA. Arg-235, Phe-238, Arg-241, Arg-247, and Arg-315 together coordinate ssDNA. 2 residues coordinate dsDNA: Arg-241 and Arg-247.

The protein belongs to the RecA family. DMC1 subfamily. In terms of tissue distribution, expressed in meiotic young panicles.

Its subcellular location is the nucleus. Its function is as follows. Recombinase that may participate in meiotic recombination, specifically in homologous strand assimilation, which is required for the resolution of meiotic double-strand breaks. Exhibits DNA-dependent ATPase activity when bound to single-stranded DNA (ssDNA). Mediates renaturation of homologous complementary strands as well as assimilation of single strands into homologous supercoiled duplexes leading to D-loop formation. Binds circular single-stranded DNA (ssDNA) and circular double-stranded DNA (dsDNA) in vitro. Catalyzes DNA homologous renaturation and DNA strand exchange. The rates of these activities are dependent on the state of ATP hydrolysis. Forms helical filaments along ssDNA and dsDNA, and promotes strand exchange between ssDNA and dsDNA with long DNA substrates of several thousand base pairs. The presence of the replication protein A is not required for this activity. Seems to be required for homologous pairing and subsequent chromosome segregation during male meiosis. May be not directly required for homologous pairing during male meiosis. Required for synaptonemal complex assembly and crossover formation. Functions redundantly with DMC1B. This is Meiotic recombination protein DMC1 homolog A from Oryza sativa subsp. japonica (Rice).